A 316-amino-acid chain; its full sequence is tRNA methyltransferase 10 homolog B (316 aa).

Residues 73 to 97 (EKIVAAKKSKRKQEKERRKANRAEN) are a coiled coil. Residues 77-98 (AAKKSKRKQEKERRKANRAENP) are disordered. The 198-residue stretch at 113–310 (TKDKLLEAKH…KGVSSGKGYI (198 aa)) folds into the SAM-dependent MTase TRM10-type domain.

The protein belongs to the class IV-like SAM-binding methyltransferase superfamily. TRM10 family.

The enzyme catalyses guanosine(9) in tRNA + S-adenosyl-L-methionine = N(1)-methylguanosine(9) in tRNA + S-adenosyl-L-homocysteine + H(+). Its function is as follows. S-adenosyl-L-methionine-dependent guanine N(1)-methyltransferase that catalyzes the formation of N(1)-methylguanine at position 9 (m1G9) in tRNAs. Probably not able to catalyze formation of N(1)-methyladenine at position 9 (m1A9) in tRNAs. The sequence is that of tRNA methyltransferase 10 homolog B (TRMT10B) from Homo sapiens (Human).